The sequence spans 98 residues: NADH-ubiquinone oxidoreductase chain 4L (98 aa).

3 consecutive transmembrane segments (helical) span residues 1-21 (MSVV…GLLV), 30-50 (LLCL…TVLT), and 61-81 (IILL…LVMI).

Belongs to the complex I subunit 4L family. As to quaternary structure, core subunit of respiratory chain NADH dehydrogenase (Complex I) which is composed of 45 different subunits.

The protein resides in the mitochondrion inner membrane. The enzyme catalyses a ubiquinone + NADH + 5 H(+)(in) = a ubiquinol + NAD(+) + 4 H(+)(out). In terms of biological role, core subunit of the mitochondrial membrane respiratory chain NADH dehydrogenase (Complex I) which catalyzes electron transfer from NADH through the respiratory chain, using ubiquinone as an electron acceptor. Part of the enzyme membrane arm which is embedded in the lipid bilayer and involved in proton translocation. The protein is NADH-ubiquinone oxidoreductase chain 4L (MT-ND4L) of Lontra canadensis (North American river otter).